Reading from the N-terminus, the 660-residue chain is Bifunctional polymyxin resistance protein ArnA (660 aa).

The formyltransferase ArnAFT stretch occupies residues 1–304; the sequence is MKAVIFAYHD…TLGLVAGARL (304 aa). The active-site Proton donor; for formyltransferase activity is the His104. Residues Arg114 and 136 to 140 contribute to the (6R)-10-formyltetrahydrofolate site; that span reads VKRAD. The segment at 314–660 is dehydrogenase ArnADH; that stretch reads RRIRVLILGV…RSVDVAERAS (347 aa). NAD(+)-binding positions include Asp347 and 368-369; that span reads DI. UDP-alpha-D-glucuronate is bound by residues Ala393, Tyr398, and 432–433; that span reads TS. Glu434 acts as the Proton acceptor; for decarboxylase activity in catalysis. UDP-alpha-D-glucuronate contacts are provided by residues Arg460, Asn492, 526 to 535, and Tyr613; that span reads KLIDGGQQKR. Catalysis depends on Arg619, which acts as the Proton donor; for decarboxylase activity.

The protein in the N-terminal section; belongs to the Fmt family. UDP-L-Ara4N formyltransferase subfamily. In the C-terminal section; belongs to the NAD(P)-dependent epimerase/dehydratase family. UDP-glucuronic acid decarboxylase subfamily. As to quaternary structure, homohexamer, formed by a dimer of trimers.

The catalysed reaction is UDP-alpha-D-glucuronate + NAD(+) = UDP-beta-L-threo-pentopyranos-4-ulose + CO2 + NADH. It carries out the reaction UDP-4-amino-4-deoxy-beta-L-arabinose + (6R)-10-formyltetrahydrofolate = UDP-4-deoxy-4-formamido-beta-L-arabinose + (6S)-5,6,7,8-tetrahydrofolate + H(+). It functions in the pathway nucleotide-sugar biosynthesis; UDP-4-deoxy-4-formamido-beta-L-arabinose biosynthesis; UDP-4-deoxy-4-formamido-beta-L-arabinose from UDP-alpha-D-glucuronate: step 1/3. The protein operates within nucleotide-sugar biosynthesis; UDP-4-deoxy-4-formamido-beta-L-arabinose biosynthesis; UDP-4-deoxy-4-formamido-beta-L-arabinose from UDP-alpha-D-glucuronate: step 3/3. Its pathway is bacterial outer membrane biogenesis; lipopolysaccharide biosynthesis. Its function is as follows. Bifunctional enzyme that catalyzes the oxidative decarboxylation of UDP-glucuronic acid (UDP-GlcUA) to UDP-4-keto-arabinose (UDP-Ara4O) and the addition of a formyl group to UDP-4-amino-4-deoxy-L-arabinose (UDP-L-Ara4N) to form UDP-L-4-formamido-arabinose (UDP-L-Ara4FN). The modified arabinose is attached to lipid A and is required for resistance to polymyxin and cationic antimicrobial peptides. In Salmonella newport (strain SL254), this protein is Bifunctional polymyxin resistance protein ArnA.